A 74-amino-acid chain; its full sequence is U2-sicaritoxin-Sdo1a (74 aa).

The signal sequence occupies residues 1-20 (MKLSFCFFLCAIVLFSFAEA). Positions 21–39 (RINPNQLKRLRELVRDDEP) are excised as a propeptide. Disulfide bonds link cysteine 42-cysteine 59, cysteine 49-cysteine 62, and cysteine 58-cysteine 71.

In terms of tissue distribution, expressed by the venom gland.

It is found in the secreted. The protein is U2-sicaritoxin-Sdo1a of Hexophthalma dolichocephala (Afrotropical spider).